Here is a 214-residue protein sequence, read N- to C-terminus: Thymidylate kinase (214 aa).

Residue 10-17 (GPDGAGKT) participates in ATP binding.

Belongs to the thymidylate kinase family.

The catalysed reaction is dTMP + ATP = dTDP + ADP. In terms of biological role, phosphorylation of dTMP to form dTDP in both de novo and salvage pathways of dTTP synthesis. This is Thymidylate kinase from Lacticaseibacillus casei (strain BL23) (Lactobacillus casei).